The primary structure comprises 365 residues: Methylthioribose-1-phosphate isomerase (365 aa).

Substrate contacts are provided by residues R53–A55, R90, and Q201. D242 acts as the Proton donor in catalysis. N252–K253 lines the substrate pocket.

This sequence belongs to the eIF-2B alpha/beta/delta subunits family. MtnA subfamily.

It carries out the reaction 5-(methylsulfanyl)-alpha-D-ribose 1-phosphate = 5-(methylsulfanyl)-D-ribulose 1-phosphate. It functions in the pathway amino-acid biosynthesis; L-methionine biosynthesis via salvage pathway; L-methionine from S-methyl-5-thio-alpha-D-ribose 1-phosphate: step 1/6. In terms of biological role, catalyzes the interconversion of methylthioribose-1-phosphate (MTR-1-P) into methylthioribulose-1-phosphate (MTRu-1-P). The chain is Methylthioribose-1-phosphate isomerase from Methylorubrum populi (strain ATCC BAA-705 / NCIMB 13946 / BJ001) (Methylobacterium populi).